Consider the following 213-residue polypeptide: RNA polymerase I subunit H (213 aa).

Basic and acidic residues predominate over residues 1 to 19 (MVERMKKDTGDETKTKVQE). Residues 1–70 (MVERMKKDTG…AREFTDKPWR (70 aa)) form a disordered region. Residues 21 to 31 (PPSPSPPPPPP) are compositionally biased toward pro residues. Composition is skewed to basic and acidic residues over residues 43–53 (VPEREKKQIER) and 60–69 (HAREFTDKPW).

In terms of tissue distribution, expressed during spermatogenesis, initially at pachytene stage with abundance increasing in round spermatids and decreasing again during spermatid elongation.

May be involved in male sterility. This is RNA polymerase I subunit H from Mus musculus (Mouse).